We begin with the raw amino-acid sequence, 615 residues long: Protein ENHANCED DISEASE RESISTANCE 4 (615 aa).

Disordered regions lie at residues 46 to 271 (IAPS…DDDE), 292 to 336 (YKEQ…GRQG), and 549 to 592 (THDI…RGSP). Polar residues-rich tracts occupy residues 63-89 (NEPQ…SSPG) and 119-129 (GDGTNEIQEQE). Positions 104–129 (MESTEKELDDLELSNGDGTNEIQEQE) form a coiled coil. Residues 134–148 (DSEKNEREDNSRLES) show a composition bias toward basic and acidic residues. Residues 159-168 (GSGSSSGSLS) are compositionally biased toward low complexity. 2 stretches are compositionally biased toward polar residues: residues 296–314 (GASS…ITTY) and 552–564 (INAN…TSES). The segment covering 565-577 (PIDKAPSKPEKLR) has biased composition (basic and acidic residues).

In terms of assembly, interacts with RLK902. Binds and recruits EDR1 at the powdery mildew (e.g. G.cichoracearum) penetration site on the plasma membrane. Interacts with CHC2. Expressed in stems and rosette leaves, and weakly in inflorescences. Not detected in roots.

It localises to the cell membrane. Its subcellular location is the endosome. Its function is as follows. Plays a negative role in salicylic acid (SA)-mediated resistance to powdery mildew (e.g. Golovinomyces cichoracearum). May modulate plant immunity by regulating the relocation of EDR1 by interacting with CHC2 and modulating endocytosis. This Arabidopsis thaliana (Mouse-ear cress) protein is Protein ENHANCED DISEASE RESISTANCE 4.